A 544-amino-acid polypeptide reads, in one-letter code: Chaperonin GroEL (544 aa).

Residues 30 to 33 (TLGP), K51, 87 to 91 (DGTTT), G415, and D495 each bind ATP.

It belongs to the chaperonin (HSP60) family. Forms a cylinder of 14 subunits composed of two heptameric rings stacked back-to-back. Interacts with the co-chaperonin GroES.

Its subcellular location is the cytoplasm. The enzyme catalyses ATP + H2O + a folded polypeptide = ADP + phosphate + an unfolded polypeptide.. In terms of biological role, together with its co-chaperonin GroES, plays an essential role in assisting protein folding. The GroEL-GroES system forms a nano-cage that allows encapsulation of the non-native substrate proteins and provides a physical environment optimized to promote and accelerate protein folding. In Agrobacterium fabrum (strain C58 / ATCC 33970) (Agrobacterium tumefaciens (strain C58)), this protein is Chaperonin GroEL.